A 1188-amino-acid chain; its full sequence is DNA polymerase (1188 aa).

Residues 1 to 74 form a disordered region; that stretch reads MALVPSPRAG…PAANNVSLTP (74 aa). Low complexity predominate over residues 31–41; that stretch reads STAGAAPTATR.

It belongs to the DNA polymerase type-B family. As to quaternary structure, heterodimer with the terminal protein; this heterodimer binds to bp 9 to 18 of the genome. Forms a complex with viral pTP, DBP and hosts NFIA and POU2F1/OCT1 for initiation of replication.

It is found in the host nucleus. It catalyses the reaction DNA(n) + a 2'-deoxyribonucleoside 5'-triphosphate = DNA(n+1) + diphosphate. Functionally, eukaryotic-type DNA polymerase involved in viral genomic replication. DNA synthesis is protein primed, and acts in a strand displacement replication. Assembles in complex with viral pTP, DBP, host NFIA and host POU2F1/OCT1 on viral origin of replication. The polymerase covalently transfers dCMP onto pTP, thereby initiating complementary strand synthesis. This chain is DNA polymerase, found in Human adenovirus F serotype 40 (HAdV-40).